Consider the following 455-residue polypeptide: MTTILKHLPINQRVGIAFSGGLDTSAALLWMQKKGAIPYAYTANLGQPDEEDYEAIPRKAMEYGAEKARLIDCRKQLVAEGIAAIQCGAFHNTTAGVTYFNTTPLGRAVTGTMLVAAMKEDDVNIWGDGSTYKGNDIERFYRYGLLTNAELKIYKPWLDTDFIDELGGRHEMSEFMIQSGFDYKMSTEKAYSTDSNMLGATHEAKDLEFLNSSVKIVNPIMGVKFWDENVVVKAEEVTVRFERGYPVALNGVVFDDSVELMMEANRIGGRHGLGMSDQIENRIIEAKSRGIYEAPGMALLHIAYERLLTGIHNEDTIEQYHANGRVLGRLLYQGRWFDPQALMLRDSIQRWVASEITGEVTLELRRGNDYSILNTVSDNLTYKPERLTMEKGDSVFSPDDRIGQLTMRNLDITDTREKLFNYVETGLLTSSAATGLPQVDNNNLSSGRGLQDKRQ.

ATP is bound by residues 17 to 25 and alanine 43; that span reads AFSGGLDTS. Tyrosine 99 is an L-citrulline binding site. ATP is bound by residues glycine 129 and threonine 131. Residues threonine 131, asparagine 135, and aspartate 136 each coordinate L-aspartate. Residue asparagine 135 participates in L-citrulline binding. Aspartate 136 is an ATP binding site. The L-citrulline site is built by arginine 139 and serine 192. Residue aspartate 194 coordinates ATP. L-citrulline-binding residues include threonine 201, glutamate 203, and glutamate 280. The segment covering 434–448 has biased composition (polar residues); it reads TGLPQVDNNNLSSGR. The interval 434 to 455 is disordered; the sequence is TGLPQVDNNNLSSGRGLQDKRQ.

It belongs to the argininosuccinate synthase family. Type 2 subfamily. Homotetramer.

The protein localises to the cytoplasm. The enzyme catalyses L-citrulline + L-aspartate + ATP = 2-(N(omega)-L-arginino)succinate + AMP + diphosphate + H(+). Its pathway is amino-acid biosynthesis; L-arginine biosynthesis; L-arginine from L-ornithine and carbamoyl phosphate: step 2/3. The protein is Argininosuccinate synthase (argG) of Yersinia pestis.